Here is a 406-residue protein sequence, read N- to C-terminus: Cysteine desulfurase (406 aa).

K226 carries the post-translational modification N6-(pyridoxal phosphate)lysine. C364 serves as the catalytic Cysteine persulfide intermediate.

It belongs to the class-V pyridoxal-phosphate-dependent aminotransferase family. Csd subfamily. In terms of assembly, homodimer. Interacts with SufE and the SufBCD complex composed of SufB, SufC and SufD. The interaction with SufE is required to mediate the direct transfer of the sulfur atom from the S-sulfanylcysteine. Pyridoxal 5'-phosphate serves as cofactor.

The protein localises to the cytoplasm. It carries out the reaction (sulfur carrier)-H + L-cysteine = (sulfur carrier)-SH + L-alanine. The enzyme catalyses L-selenocysteine + AH2 = hydrogenselenide + L-alanine + A + H(+). The protein operates within cofactor biosynthesis; iron-sulfur cluster biosynthesis. In terms of biological role, cysteine desulfurases mobilize the sulfur from L-cysteine to yield L-alanine, an essential step in sulfur metabolism for biosynthesis of a variety of sulfur-containing biomolecules. Component of the suf operon, which is activated and required under specific conditions such as oxidative stress and iron limitation. Acts as a potent selenocysteine lyase in vitro, that mobilizes selenium from L-selenocysteine. Selenocysteine lyase activity is however unsure in vivo. The protein is Cysteine desulfurase of Escherichia coli (strain SE11).